We begin with the raw amino-acid sequence, 110 residues long: T cell receptor alpha variable 22 (110 aa).

The N-terminal stretch at methionine 1–glycine 21 is a signal peptide. The region spanning isoleucine 22–glutamate 110 is the Ig-like domain. N-linked (GlcNAc...) asparagine glycosylation is found at asparagine 38 and asparagine 44. An intrachain disulfide couples cysteine 43 to cysteine 107.

In terms of assembly, alpha-beta TR is a heterodimer composed of an alpha and beta chain; disulfide-linked. The alpha-beta TR is associated with the transmembrane signaling CD3 coreceptor proteins to form the TR-CD3 (TcR or TCR). The assembly of alpha-beta TR heterodimers with CD3 occurs in the endoplasmic reticulum where a single alpha-beta TR heterodimer associates with one CD3D-CD3E heterodimer, one CD3G-CD3E heterodimer and one CD247 homodimer forming a stable octameric structure. CD3D-CD3E and CD3G-CD3E heterodimers preferentially associate with TR alpha and TR beta chains, respectively. The association of the CD247 homodimer is the last step of TcR assembly in the endoplasmic reticulum and is required for transport to the cell surface.

The protein localises to the cell membrane. V region of the variable domain of T cell receptor (TR) alpha chain that participates in the antigen recognition. Alpha-beta T cell receptors are antigen specific receptors which are essential to the immune response and are present on the cell surface of T lymphocytes. Recognize peptide-major histocompatibility (MH) (pMH) complexes that are displayed by antigen presenting cells (APC), a prerequisite for efficient T cell adaptive immunity against pathogens. Binding of alpha-beta TR to pMH complex initiates TR-CD3 clustering on the cell surface and intracellular activation of LCK that phosphorylates the ITAM motifs of CD3G, CD3D, CD3E and CD247 enabling the recruitment of ZAP70. In turn ZAP70 phosphorylates LAT, which recruits numerous signaling molecules to form the LAT signalosome. The LAT signalosome propagates signal branching to three major signaling pathways, the calcium, the mitogen-activated protein kinase (MAPK) kinase and the nuclear factor NF-kappa-B (NF-kB) pathways, leading to the mobilization of transcription factors that are critical for gene expression and essential for T cell growth and differentiation. The T cell repertoire is generated in the thymus, by V-(D)-J rearrangement. This repertoire is then shaped by intrathymic selection events to generate a peripheral T cell pool of self-MH restricted, non-autoaggressive T cells. Post-thymic interaction of alpha-beta TR with the pMH complexes shapes TR structural and functional avidity. This is T cell receptor alpha variable 22 from Homo sapiens (Human).